Consider the following 458-residue polypeptide: Argininosuccinate lyase (458 aa).

The protein belongs to the lyase 1 family. Argininosuccinate lyase subfamily.

The protein localises to the cytoplasm. It carries out the reaction 2-(N(omega)-L-arginino)succinate = fumarate + L-arginine. Its pathway is amino-acid biosynthesis; L-arginine biosynthesis; L-arginine from L-ornithine and carbamoyl phosphate: step 3/3. The sequence is that of Argininosuccinate lyase from Salmonella heidelberg (strain SL476).